The primary structure comprises 192 residues: Ribose 1,5-bisphosphate phosphokinase PhnN (192 aa).

ATP is bound at residue 15–22 (GPSGAGKD).

The protein belongs to the ribose 1,5-bisphosphokinase family.

The catalysed reaction is alpha-D-ribose 1,5-bisphosphate + ATP = 5-phospho-alpha-D-ribose 1-diphosphate + ADP. Its pathway is metabolic intermediate biosynthesis; 5-phospho-alpha-D-ribose 1-diphosphate biosynthesis; 5-phospho-alpha-D-ribose 1-diphosphate from D-ribose 5-phosphate (route II): step 3/3. Catalyzes the phosphorylation of ribose 1,5-bisphosphate to 5-phospho-D-ribosyl alpha-1-diphosphate (PRPP). In Brucella melitensis biotype 2 (strain ATCC 23457), this protein is Ribose 1,5-bisphosphate phosphokinase PhnN.